A 343-amino-acid chain; its full sequence is uncharacterized protein (343 aa).

Residues 66-89 (TQNPEPTSASTPPSASASSLPNGA) are disordered. The segment covering 71–84 (PTSASTPPSASASS) has biased composition (low complexity). Residues 96 to 116 (GVIAGPIVGVLGGLIVLVIIF) traverse the membrane as a helical segment. 2 disordered regions span residues 161-191 (GGYQMHSTPWASSPRNSTIPQRSQSFYNDTR) and 252-343 (GRPL…SEHF). The segment covering 165–188 (MHSTPWASSPRNSTIPQRSQSFYN) has biased composition (polar residues). The segment covering 280–289 (SNDDSDETKL) has biased composition (basic and acidic residues). Low complexity predominate over residues 290-299 (KQSSTESSSE). 2 stretches are compositionally biased toward basic and acidic residues: residues 301–311 (LDEKDKFDKNS) and 322–333 (SSYEHEISEEHK). A compositionally biased stretch (basic residues) spans 334–343 (KHSKKRSEHF).

The protein resides in the golgi apparatus membrane. This is an uncharacterized protein from Schizosaccharomyces pombe (strain 972 / ATCC 24843) (Fission yeast).